We begin with the raw amino-acid sequence, 306 residues long: Tyrosine recombinase XerC (306 aa).

The 90-residue stretch at 1-90 folds into the Core-binding (CB) domain; that stretch reads MYVHIDNFLV…AWRSFYRYLY (90 aa). The Tyr recombinase domain occupies 111–298; sequence RLPRFLYEDE…TGERLKKVYR (188 aa). Residues Arg151, Lys175, His250, Arg253, and His276 contribute to the active site. The O-(3'-phospho-DNA)-tyrosine intermediate role is filled by Tyr285.

It belongs to the 'phage' integrase family. XerC subfamily. Forms a cyclic heterotetrameric complex composed of two molecules of XerC and two molecules of XerD.

Its subcellular location is the cytoplasm. Its function is as follows. Site-specific tyrosine recombinase, which acts by catalyzing the cutting and rejoining of the recombining DNA molecules. The XerC-XerD complex is essential to convert dimers of the bacterial chromosome into monomers to permit their segregation at cell division. It also contributes to the segregational stability of plasmids. This chain is Tyrosine recombinase XerC, found in Pelotomaculum thermopropionicum (strain DSM 13744 / JCM 10971 / SI).